A 331-amino-acid polypeptide reads, in one-letter code: Phosphate acyltransferase (331 aa).

Belongs to the PlsX family. As to quaternary structure, homodimer. Probably interacts with PlsY.

The protein resides in the cytoplasm. The catalysed reaction is a fatty acyl-[ACP] + phosphate = an acyl phosphate + holo-[ACP]. The protein operates within lipid metabolism; phospholipid metabolism. Functionally, catalyzes the reversible formation of acyl-phosphate (acyl-PO(4)) from acyl-[acyl-carrier-protein] (acyl-ACP). This enzyme utilizes acyl-ACP as fatty acyl donor, but not acyl-CoA. The chain is Phosphate acyltransferase from Ureaplasma urealyticum serovar 10 (strain ATCC 33699 / Western).